Here is a 254-residue protein sequence, read N- to C-terminus: Winged helix repair factor 1 (254 aa).

Residues 4-21 carry the Bipartite nuclear localization signal motif; sequence KRHHLIPETFGVKRRRKR. Winged helix domain regions lie at residues 32 to 104, 120 to 179, and 180 to 254; these read EPGS…GIIF, PYAG…LAVP, and GAGR…LPET.

It belongs to the STK19 family. As to quaternary structure, monomer in solution. Homodimer; when bound to DNA. Component of a transcription-coupled nucleotide excision repair (TC-NER) complex composed of STK19, ERCC6, ERCC8, DDA1, DDB1, ELOF1 and UVSSA which assembles and interacts with the multiprotein RNA polymerase II complex when it stalls at DNA lesions. In terms of tissue distribution, monocytes, hepatocytes, epithelial cells, T- and B-lymphocytes.

The protein resides in the nucleus. It is found in the cytoplasm. In terms of biological role, DNA-binding protein which is required for efficient transcription-coupled nucleotide excision repair (TC-NER). Acts as part of a TC-NER complex which assembles and interacts with RNA polymerase II (RNAPII) when it stalls at DNA lesions. TC-NER complex subunit UVSSA binds to the GTF2H1/p62 subunit of the TFIIH transcription factor complex, tethering TFIIH to the TC-NER complex. WHR1/STK19 then interacts with the XPD helicase subunit of TFIIH which guides TFIIH to DNA downstream of the stalled RNAPII, ensuring DNA repair. Directly interacts with RNAPII and also binds to downstream DNA. Promotes the timely removal of DNA damage-stalled RNAPII, allowing downstream NER factors to access DNA lesions. Required for monoubiquitination of UVSSA. Regulates repositioning and stabilization of UVSSA within the TC-NER complex. Stimulates ubiquitination of RNAPII complex member RBP1. Also binds to RNA and regulates the expression levels of many mRNAs. This chain is Winged helix repair factor 1, found in Homo sapiens (Human).